The following is a 379-amino-acid chain: Guanine nucleotide-binding protein G(s) subunit alpha (379 aa).

The interval 1 to 25 (MGCLGNSKTEDQRNEEKVQRETNKK) is disordered. Glycine 2 is lipidated: N-palmitoyl glycine. The S-palmitoyl cysteine moiety is linked to residue cysteine 3. Over residues 8–25 (KTEDQRNEEKVQRETNKK) the composition is skewed to basic and acidic residues. Residues 39 to 379 (ATHRLLLLGA…RMHLRQYELL (341 aa)) form the G-alpha domain. The G1 motif stretch occupies residues 42 to 55 (RLLLLGAGESGKSS). GTP is bound by residues 47 to 55 (GAGESGKSS), 182 to 189 (LLRCRVLT), 208 to 212 (DVGGQ), 277 to 280 (NKQD), and alanine 351. The Mg(2+) site is built by serine 54 and threonine 189. The tract at residues 181-189 (DLLRCRVLT) is G2 motif. A G3 motif region spans residues 204 to 213 (FHMFDVGGQR). The G4 motif stretch occupies residues 273–280 (ILFLNKQD). The tract at residues 349–354 (TCAVDT) is G5 motif.

Belongs to the G-alpha family. G(s) subfamily. As to quaternary structure, heterotrimeric G proteins are composed of 3 units; alpha, beta and gamma. The alpha chain contains the guanine nucleotide binding site.

It is found in the cell membrane. Guanine nucleotide-binding proteins (G proteins) function as transducers in numerous signaling pathways controlled by G protein-coupled receptors (GPCRs). Signaling involves the activation of adenylyl cyclases, resulting in increased levels of the signaling molecule cAMP. GNAS functions downstream of several GPCRs, including beta-adrenergic receptors. Stimulates the Ras signaling pathway. The chain is Guanine nucleotide-binding protein G(s) subunit alpha (gnas) from Xenopus laevis (African clawed frog).